Here is a 595-residue protein sequence, read N- to C-terminus: Elongation factor 4 (595 aa).

The 183-residue stretch at 2–184 (SHIRNFSIIA…RLVATIPAPT (183 aa)) folds into the tr-type G domain. GTP is bound by residues 14–19 (DHGKST) and 131–134 (NKMD).

This sequence belongs to the TRAFAC class translation factor GTPase superfamily. Classic translation factor GTPase family. LepA subfamily.

It is found in the cell inner membrane. The enzyme catalyses GTP + H2O = GDP + phosphate + H(+). In terms of biological role, required for accurate and efficient protein synthesis under certain stress conditions. May act as a fidelity factor of the translation reaction, by catalyzing a one-codon backward translocation of tRNAs on improperly translocated ribosomes. Back-translocation proceeds from a post-translocation (POST) complex to a pre-translocation (PRE) complex, thus giving elongation factor G a second chance to translocate the tRNAs correctly. Binds to ribosomes in a GTP-dependent manner. The sequence is that of Elongation factor 4 from Pseudomonas savastanoi pv. phaseolicola (strain 1448A / Race 6) (Pseudomonas syringae pv. phaseolicola (strain 1448A / Race 6)).